Here is a 493-residue protein sequence, read N- to C-terminus: Ribulose bisphosphate carboxylase large chain (493 aa).

The substrate site is built by Asn-132 and Thr-182. Lys-184 functions as the Proton acceptor in the catalytic mechanism. Position 186 (Lys-186) interacts with substrate. Positions 210, 212, and 213 each coordinate Mg(2+). The residue at position 210 (Lys-210) is an N6-carboxylysine. Catalysis depends on His-302, which acts as the Proton acceptor. Substrate is bound by residues Arg-303, His-335, and Ser-387.

It belongs to the RuBisCO large chain family. Type I subfamily. As to quaternary structure, heterohexadecamer of 8 large chains and 8 small chains. Requires Mg(2+) as cofactor.

The catalysed reaction is 2 (2R)-3-phosphoglycerate + 2 H(+) = D-ribulose 1,5-bisphosphate + CO2 + H2O. It catalyses the reaction D-ribulose 1,5-bisphosphate + O2 = 2-phosphoglycolate + (2R)-3-phosphoglycerate + 2 H(+). In terms of biological role, ruBisCO catalyzes two reactions: the carboxylation of D-ribulose 1,5-bisphosphate, the primary event in carbon dioxide fixation, as well as the oxidative fragmentation of the pentose substrate. Both reactions occur simultaneously and in competition at the same active site. The chain is Ribulose bisphosphate carboxylase large chain from Acidiphilium cryptum (strain JF-5).